An 827-amino-acid polypeptide reads, in one-letter code: Glycerol-3-phosphate acyltransferase (827 aa).

An HXXXXD motif motif is present at residues 325-330 (CHRSHM).

It belongs to the GPAT/DAPAT family.

It localises to the cell inner membrane. The enzyme catalyses sn-glycerol 3-phosphate + an acyl-CoA = a 1-acyl-sn-glycero-3-phosphate + CoA. It participates in phospholipid metabolism; CDP-diacylglycerol biosynthesis; CDP-diacylglycerol from sn-glycerol 3-phosphate: step 1/3. The protein is Glycerol-3-phosphate acyltransferase of Shigella boydii serotype 4 (strain Sb227).